The sequence spans 263 residues: Malonyl-[acyl-carrier protein] O-methyltransferase (263 aa).

The protein belongs to the methyltransferase superfamily.

The catalysed reaction is malonyl-[ACP] + S-adenosyl-L-methionine = malonyl-[ACP] methyl ester + S-adenosyl-L-homocysteine. Its pathway is cofactor biosynthesis; biotin biosynthesis. In terms of biological role, converts the free carboxyl group of a malonyl-thioester to its methyl ester by transfer of a methyl group from S-adenosyl-L-methionine (SAM). It allows to synthesize pimeloyl-ACP via the fatty acid synthetic pathway. The protein is Malonyl-[acyl-carrier protein] O-methyltransferase of Chlorobium luteolum (strain DSM 273 / BCRC 81028 / 2530) (Pelodictyon luteolum).